A 123-amino-acid polypeptide reads, in one-letter code: Fluoride-specific ion channel FluC (123 aa).

4 consecutive transmembrane segments (helical) span residues 1–21 (MQWLAIGLGAAIGACLRGWLA), 32–52 (LGTLGANVLGGLLIGLALVWF), 66–86 (FVITGFLGGLTTFSTFSVEVF), and 99–119 (GLIGLHVGLTLLATALGFYFF). Na(+) contacts are provided by Gly73 and Thr76.

The protein belongs to the fluoride channel Fluc/FEX (TC 1.A.43) family.

Its subcellular location is the cell inner membrane. It carries out the reaction fluoride(in) = fluoride(out). With respect to regulation, na(+) is not transported, but it plays an essential structural role and its presence is essential for fluoride channel function. Fluoride-specific ion channel. Important for reducing fluoride concentration in the cell, thus reducing its toxicity. The protein is Fluoride-specific ion channel FluC of Psychrobacter cryohalolentis (strain ATCC BAA-1226 / DSM 17306 / VKM B-2378 / K5).